The primary structure comprises 136 residues: Single-stranded DNA-binding protein 1 (136 aa).

Residues 4–109 form the SSB domain; that stretch reads LNKMQLIGNL…IMAKEMQMLG (106 aa). The segment at 109 to 136 is disordered; that stretch reads GKKQDNNKVGNARHGDALPADEDDYYDF. A compositionally biased stretch (acidic residues) spans 127–136; the sequence is PADEDDYYDF.

Homotetramer.

The polypeptide is Single-stranded DNA-binding protein 1 (ssb1) (Xylella fastidiosa (strain 9a5c)).